The primary structure comprises 223 residues: Cuticular glutathione peroxidase (223 aa).

The signal sequence occupies residues 1 to 19 (MSAQLLILSHVVLLQLIVA). Asn-39 carries N-linked (GlcNAc...) asparagine glycosylation. Residue Cys-74 is part of the active site. Residue Asn-92 is glycosylated (N-linked (GlcNAc...) asparagine).

The protein belongs to the glutathione peroxidase family. As to quaternary structure, homotetramer.

The protein localises to the secreted. It carries out the reaction 2 glutathione + H2O2 = glutathione disulfide + 2 H2O. Could inhibit the oxidative burst of leukocytes and neutralize the secondary products of lipid peroxidation, thus providing the resistance of these parasites to immune effector mechanisms and their persistence in the mammalian host. It may also be involved in the formation of cross-linking residues such as dityrosine, trityrosine and isotrityrosine identified in cuticular collagen. Highly cross-linked external cortex may also serve to protect the parasite from immune attack. The chain is Cuticular glutathione peroxidase from Wuchereria bancrofti.